A 231-amino-acid chain; its full sequence is Large ribosomal subunit protein uL1 (231 aa).

Belongs to the universal ribosomal protein uL1 family. In terms of assembly, part of the 50S ribosomal subunit.

Binds directly to 23S rRNA. The L1 stalk is quite mobile in the ribosome, and is involved in E site tRNA release. Functionally, protein L1 is also a translational repressor protein, it controls the translation of the L11 operon by binding to its mRNA. The polypeptide is Large ribosomal subunit protein uL1 (Polaromonas naphthalenivorans (strain CJ2)).